The sequence spans 452 residues: MLKLQMVLMSLLLLPLIVNLYPWIIALTLSALLLPTCFNLVNSASYSMFTEYMSSDMMSFTLSALTIWVTVMMILASTKIMHLNMYPKMFMTNLVILLIILINCFLSPNLIMFYIWFEASLIPTMVLIMTWGYQPERSQASMYLMIYTVAASLPMLMVLCKIFIVSKTAMMPMFMNMEFPMDYPSMALAWVLTLGGFLVKLPMFTVHLWLPKAHVEAPIAGSMILAAILLKLGGYGILRMLSLFHYMAKSTSSLLSSVALVGAVSTSLICLRQSDLKSLIAYSSVGHMGLMVAGALMSSNWGFQAALAMMIAHGLSSSALFVMANMNYELTHTRSLFLMKGLLVLAPTLTMWWFLFTASNMAAPPSINLLSEIMLITSILKMSTSAFILLGLTSFFTAAYCLYMYTSMHHGPLMLTSNPIPQFKVKDLTLMTMHLVPTILIIFKPELITSWS.

14 consecutive transmembrane segments (helical) span residues 7–27, 57–77, 95–115, 116–136, 145–165, 186–206, 218–238, 251–271, 278–298, 303–323, 336–356, 360–380, 386–406, and 428–448; these read VLMSLLLLPLIVNLYPWIIAL, MMSFTLSALTIWVTVMMILAS, VILLIILINCFLSPNLIMFYI, WFEASLIPTMVLIMTWGYQPE, MIYTVAASLPMLMVLCKIFIV, MALAWVLTLGGFLVKLPMFTV, PIAGSMILAAILLKLGGYGIL, TSSLLSSVALVGAVSTSLICL, SLIAYSSVGHMGLMVAGALMS, FQAALAMMIAHGLSSSALFVM, LFLMKGLLVLAPTLTMWWFLF, NMAAPPSINLLSEIMLITSIL, AFILLGLTSFFTAAYCLYMYT, and LTLMTMHLVPTILIIFKPELI.

It belongs to the complex I subunit 4 family.

It localises to the mitochondrion membrane. It carries out the reaction a ubiquinone + NADH + 5 H(+)(in) = a ubiquinol + NAD(+) + 4 H(+)(out). In terms of biological role, core subunit of the mitochondrial membrane respiratory chain NADH dehydrogenase (Complex I) that is believed to belong to the minimal assembly required for catalysis. Complex I functions in the transfer of electrons from NADH to the respiratory chain. The immediate electron acceptor for the enzyme is believed to be ubiquinone. The polypeptide is NADH-ubiquinone oxidoreductase chain 4 (ND4) (Lumbricus terrestris (Common earthworm)).